The following is a 487-amino-acid chain: Probable glycine dehydrogenase (decarboxylating) subunit 2 (487 aa).

Position 269 is an N6-(pyridoxal phosphate)lysine (Lys-269).

Belongs to the GcvP family. C-terminal subunit subfamily. The glycine cleavage system is composed of four proteins: P, T, L and H. In this organism, the P 'protein' is a heterodimer of two subunits. Pyridoxal 5'-phosphate is required as a cofactor.

It carries out the reaction N(6)-[(R)-lipoyl]-L-lysyl-[glycine-cleavage complex H protein] + glycine + H(+) = N(6)-[(R)-S(8)-aminomethyldihydrolipoyl]-L-lysyl-[glycine-cleavage complex H protein] + CO2. The glycine cleavage system catalyzes the degradation of glycine. The P protein binds the alpha-amino group of glycine through its pyridoxal phosphate cofactor; CO(2) is released and the remaining methylamine moiety is then transferred to the lipoamide cofactor of the H protein. This Prosthecochloris aestuarii (strain DSM 271 / SK 413) protein is Probable glycine dehydrogenase (decarboxylating) subunit 2.